A 239-amino-acid chain; its full sequence is Large ribosomal subunit protein uL1 (239 aa).

The protein belongs to the universal ribosomal protein uL1 family. As to quaternary structure, part of the 50S ribosomal subunit.

Functionally, binds directly to 23S rRNA. The L1 stalk is quite mobile in the ribosome, and is involved in E site tRNA release. Protein L1 is also a translational repressor protein, it controls the translation of the L11 operon by binding to its mRNA. The polypeptide is Large ribosomal subunit protein uL1 (Rickettsia africae (strain ESF-5)).